Consider the following 314-residue polypeptide: Ribonuclease Z (314 aa).

7 residues coordinate Zn(2+): H63, H65, D67, H68, H142, D205, and H263. The active-site Proton acceptor is the D67.

It belongs to the RNase Z family. In terms of assembly, homodimer. The cofactor is Zn(2+).

It catalyses the reaction Endonucleolytic cleavage of RNA, removing extra 3' nucleotides from tRNA precursor, generating 3' termini of tRNAs. A 3'-hydroxy group is left at the tRNA terminus and a 5'-phosphoryl group is left at the trailer molecule.. Zinc phosphodiesterase, which displays some tRNA 3'-processing endonuclease activity. Probably involved in tRNA maturation, by removing a 3'-trailer from precursor tRNA. This is Ribonuclease Z from Kineococcus radiotolerans (strain ATCC BAA-149 / DSM 14245 / SRS30216).